The chain runs to 321 residues: MEMLESKPLSAISMVIDSIGVDHENQNKCNCCNEQIYDRYIYRMDNRSYHENCVKCTICESPLAEKCFWKNGRIYCSQHYYKDHSIHRCAGCKKGVSPTDMVYKLKAGLVFHVECHCCSLCGRHLSPGEQILVDDTMMTVSCMSHYPPQMDDNAPGAIGSAVDIPSCSTENPIAPYPIDESFSSAFQVKKEVDAYGYNFEHYSFSDFCDDDSRMLKRRGPRTTIKQNQLDVLNEMFSNTPKPSKHARAKLALETGLSMRVIQVWFQNRRSKERRLKHLCNYLRHYEQRGLIPPPIHFRNEEMDTTDFNAFCGNFEEEDDED.

2 consecutive LIM zinc-binding domains span residues 27-86 (NKCN…DHSI) and 87-152 (HRCA…QMDD). A DNA-binding region (homeobox) is located at residues 217 to 276 (RRGPRTTIKQNQLDVLNEMFSNTPKPSKHARAKLALETGLSMRVIQVWFQNRRSKERRLK).

Interacts with unc-86; the heterooligomer binds to the promoters of mec-3, mec-4 and mec-7. Expressed in the mechanosensory neurons ALML, ALMR, PLML, PLMR, AVM and PVM, and the FLPL and FLPR neurons.

It is found in the nucleus. Its function is as follows. Transcription factor. Specifies differentiation of the set of six touch receptor neurons (TRNs). May positively modulate expression of both its own gene and also of homeobox ARX homolog alr-1 in TRNs, forming a positive feedback loop with alr-1, thereby restricting the variability of expression of mec-3. Required to determine the identity of ALM sensory neurons, acting by interacting with unc-86, thereby preventing unc-86 cooperating with pag-3 to induce BDU-neuron specific genes. Binds cooperatively as a heterodimer with unc-86 to sites in the mec-3 gene promoter. Promotes outgrowth of lateral dendritic branches on the PVD nociceptive neurons, probably acting both directly, and upstream of zinc finger protein egl-46. The sequence is that of Mechanosensory protein 3 (mec-3) from Caenorhabditis elegans.